We begin with the raw amino-acid sequence, 350 residues long: Ion-translocating oxidoreductase complex subunit D (350 aa).

5 helical membrane passes run Leu19–Gly39, Gly41–Leu61, Pro67–Ser87, Leu88–Ala108, and Pro122–Leu142. At Thr186 the chain carries FMN phosphoryl threonine. 4 helical membrane-spanning segments follow: residues Trp213–Leu233, Ile242–Pro262, Ala264–Ile284, and Leu299–Gly316.

The protein belongs to the NqrB/RnfD family. The complex is composed of six subunits: RnfA, RnfB, RnfC, RnfD, RnfE and RnfG. It depends on FMN as a cofactor.

The protein resides in the cell inner membrane. Part of a membrane-bound complex that couples electron transfer with translocation of ions across the membrane. This chain is Ion-translocating oxidoreductase complex subunit D, found in Aeromonas hydrophila subsp. hydrophila (strain ATCC 7966 / DSM 30187 / BCRC 13018 / CCUG 14551 / JCM 1027 / KCTC 2358 / NCIMB 9240 / NCTC 8049).